The following is a 106-amino-acid chain: Small membrane A-kinase anchor protein (106 aa).

G2 carries the N-myristoyl glycine lipid modification. Residue C3 is the site of S-palmitoyl cysteine attachment. S40 bears the Phosphoserine mark. Positions 62-85 are PKA-RI-binding; sequence ALILEFADRLASEIVEDALQQWAC. A Phosphoserine modification is found at S98.

This sequence belongs to the small membrane AKAP family. Interacts with PKA type I regulatory subunits PRKAR1A and PRKAR1B. Also binds to type II regulatory subunits, but at a tenfold lower affinity. May be palmitoylated at Cys-3. As to expression, widely expressed, with very low levels in spleen and liver.

It is found in the cell membrane. Functionally, binds to type I regulatory subunits of protein kinase A (PKA-RI) and may anchor/target them to the plasma membrane. The protein is Small membrane A-kinase anchor protein of Mus musculus (Mouse).